We begin with the raw amino-acid sequence, 378 residues long: UPF0754 membrane protein Exig_0680 (378 aa).

2 helical membrane-spanning segments follow: residues 5-25 (VDLV…GAVT) and 357-377 (ITWL…ILLI).

Belongs to the UPF0754 family.

The protein resides in the cell membrane. In Exiguobacterium sibiricum (strain DSM 17290 / CCUG 55495 / CIP 109462 / JCM 13490 / 255-15), this protein is UPF0754 membrane protein Exig_0680.